A 258-amino-acid polypeptide reads, in one-letter code: Isoprenyl transferase (258 aa).

Aspartate 38 is a catalytic residue. Aspartate 38 is a Mg(2+) binding site. Substrate-binding positions include 39-42 (GNGR), tryptophan 43, arginine 51, histidine 55, and 83-85 (STE). Catalysis depends on asparagine 86, which acts as the Proton acceptor. Residues tryptophan 87, arginine 89, arginine 206, and 212-214 (RIS) each bind substrate. Glutamate 225 provides a ligand contact to Mg(2+).

The protein belongs to the UPP synthase family. In terms of assembly, homodimer. It depends on Mg(2+) as a cofactor.

Functionally, catalyzes the condensation of isopentenyl diphosphate (IPP) with allylic pyrophosphates generating different type of terpenoids. The sequence is that of Isoprenyl transferase from Bacillus thuringiensis subsp. konkukian (strain 97-27).